The chain runs to 242 residues: tRNA (guanine-N(1)-)-methyltransferase (242 aa).

S-adenosyl-L-methionine is bound by residues Gly-109 and 129–134 (LGDFVL).

The protein belongs to the RNA methyltransferase TrmD family. Homodimer.

Its subcellular location is the cytoplasm. It carries out the reaction guanosine(37) in tRNA + S-adenosyl-L-methionine = N(1)-methylguanosine(37) in tRNA + S-adenosyl-L-homocysteine + H(+). Specifically methylates guanosine-37 in various tRNAs. This is tRNA (guanine-N(1)-)-methyltransferase from Exiguobacterium sibiricum (strain DSM 17290 / CCUG 55495 / CIP 109462 / JCM 13490 / 255-15).